The chain runs to 227 residues: Cytochrome c oxidase subunit 2 (227 aa).

At 1-14 (MAYPMQLGFQDATS) the chain is on the mitochondrial intermembrane side. Residues 15–45 (PIMEELLHFHDHTLMIVLLISSLVLYIISLM) form a helical membrane-spanning segment. Residues 46 to 59 (LTTKLTHTSTMDAQ) lie on the Mitochondrial matrix side of the membrane. Residues 60-87 (EVETIWTILPAIILILIALPSLRILYMM) traverse the membrane as a helical segment. The Mitochondrial intermembrane segment spans residues 88 to 227 (DEINNPSLTV…YFEKWSASML (140 aa)). Positions 161, 196, 198, 200, 204, and 207 each coordinate Cu cation. Residue Glu-198 participates in Mg(2+) binding. A Phosphotyrosine modification is found at Tyr-218.

The protein belongs to the cytochrome c oxidase subunit 2 family. In terms of assembly, component of the cytochrome c oxidase (complex IV, CIV), a multisubunit enzyme composed of 14 subunits. The complex is composed of a catalytic core of 3 subunits MT-CO1, MT-CO2 and MT-CO3, encoded in the mitochondrial DNA, and 11 supernumerary subunits COX4I, COX5A, COX5B, COX6A, COX6B, COX6C, COX7A, COX7B, COX7C, COX8 and NDUFA4, which are encoded in the nuclear genome. The complex exists as a monomer or a dimer and forms supercomplexes (SCs) in the inner mitochondrial membrane with NADH-ubiquinone oxidoreductase (complex I, CI) and ubiquinol-cytochrome c oxidoreductase (cytochrome b-c1 complex, complex III, CIII), resulting in different assemblies (supercomplex SCI(1)III(2)IV(1) and megacomplex MCI(2)III(2)IV(2)). Found in a complex with TMEM177, COA6, COX18, COX20, SCO1 and SCO2. Interacts with TMEM177 in a COX20-dependent manner. Interacts with COX20. Interacts with COX16. Cu cation serves as cofactor.

It is found in the mitochondrion inner membrane. The catalysed reaction is 4 Fe(II)-[cytochrome c] + O2 + 8 H(+)(in) = 4 Fe(III)-[cytochrome c] + 2 H2O + 4 H(+)(out). In terms of biological role, component of the cytochrome c oxidase, the last enzyme in the mitochondrial electron transport chain which drives oxidative phosphorylation. The respiratory chain contains 3 multisubunit complexes succinate dehydrogenase (complex II, CII), ubiquinol-cytochrome c oxidoreductase (cytochrome b-c1 complex, complex III, CIII) and cytochrome c oxidase (complex IV, CIV), that cooperate to transfer electrons derived from NADH and succinate to molecular oxygen, creating an electrochemical gradient over the inner membrane that drives transmembrane transport and the ATP synthase. Cytochrome c oxidase is the component of the respiratory chain that catalyzes the reduction of oxygen to water. Electrons originating from reduced cytochrome c in the intermembrane space (IMS) are transferred via the dinuclear copper A center (CU(A)) of subunit 2 and heme A of subunit 1 to the active site in subunit 1, a binuclear center (BNC) formed by heme A3 and copper B (CU(B)). The BNC reduces molecular oxygen to 2 water molecules using 4 electrons from cytochrome c in the IMS and 4 protons from the mitochondrial matrix. This Bubalus depressicornis (Lowland anoa) protein is Cytochrome c oxidase subunit 2 (MT-CO2).